Here is a 341-residue protein sequence, read N- to C-terminus: UDP-3-O-acylglucosamine N-acyltransferase (341 aa).

H239 acts as the Proton acceptor in catalysis.

This sequence belongs to the transferase hexapeptide repeat family. LpxD subfamily. In terms of assembly, homotrimer.

It carries out the reaction a UDP-3-O-[(3R)-3-hydroxyacyl]-alpha-D-glucosamine + a (3R)-hydroxyacyl-[ACP] = a UDP-2-N,3-O-bis[(3R)-3-hydroxyacyl]-alpha-D-glucosamine + holo-[ACP] + H(+). It functions in the pathway bacterial outer membrane biogenesis; LPS lipid A biosynthesis. In terms of biological role, catalyzes the N-acylation of UDP-3-O-acylglucosamine using 3-hydroxyacyl-ACP as the acyl donor. Is involved in the biosynthesis of lipid A, a phosphorylated glycolipid that anchors the lipopolysaccharide to the outer membrane of the cell. The protein is UDP-3-O-acylglucosamine N-acyltransferase of Shewanella sp. (strain MR-7).